The primary structure comprises 208 residues: MIGFLQGYVVSLQQTSTHRTLLTLDVNQVGYDLYVPSRIRQHLPPDQEQMRVFTHLQVREDQMVLFGFAVVAERDLFRQLIAVSGIGPQLALALIDTLGLQDLVQAIVNSNTKMLVKTPGVGAKTAERIALELRSKLAEWRDQAGLKTLPSAGPIDSVQEDVEMTLLALGYTSQEVMRALQAVGQNTALAKNSDTEAWIREAIAWLSQ.

The interval 1–69 is domain I; it reads MIGFLQGYVV…EDQMVLFGFA (69 aa). Residues 70–148 form a domain II region; it reads VVAERDLFRQ…EWRDQAGLKT (79 aa). A flexible linker region spans residues 149-159; it reads LPSAGPIDSVQ. Residues 159–208 are domain III; that stretch reads QEDVEMTLLALGYTSQEVMRALQAVGQNTALAKNSDTEAWIREAIAWLSQ.

The protein belongs to the RuvA family. Homotetramer. Forms an RuvA(8)-RuvB(12)-Holliday junction (HJ) complex. HJ DNA is sandwiched between 2 RuvA tetramers; dsDNA enters through RuvA and exits via RuvB. An RuvB hexamer assembles on each DNA strand where it exits the tetramer. Each RuvB hexamer is contacted by two RuvA subunits (via domain III) on 2 adjacent RuvB subunits; this complex drives branch migration. In the full resolvosome a probable DNA-RuvA(4)-RuvB(12)-RuvC(2) complex forms which resolves the HJ.

The protein localises to the cytoplasm. Functionally, the RuvA-RuvB-RuvC complex processes Holliday junction (HJ) DNA during genetic recombination and DNA repair, while the RuvA-RuvB complex plays an important role in the rescue of blocked DNA replication forks via replication fork reversal (RFR). RuvA specifically binds to HJ cruciform DNA, conferring on it an open structure. The RuvB hexamer acts as an ATP-dependent pump, pulling dsDNA into and through the RuvAB complex. HJ branch migration allows RuvC to scan DNA until it finds its consensus sequence, where it cleaves and resolves the cruciform DNA. The polypeptide is Holliday junction branch migration complex subunit RuvA (Acaryochloris marina (strain MBIC 11017)).